Consider the following 58-residue polypeptide: Small ribosomal subunit protein bS21 (58 aa).

Belongs to the bacterial ribosomal protein bS21 family.

This chain is Small ribosomal subunit protein bS21, found in Streptococcus pyogenes serotype M49 (strain NZ131).